The chain runs to 572 residues: Urease subunit alpha (572 aa).

The Urease domain maps to 136–572 (GGIDTHIHFI…VPLGQRYFLF (437 aa)). Positions 141, 143, and 224 each coordinate Ni(2+). Residue Lys-224 is modified to N6-carboxylysine. His-226 serves as a coordination point for substrate. The Ni(2+) site is built by His-253 and His-279. The Proton donor role is filled by His-327. Asp-367 contacts Ni(2+).

It belongs to the metallo-dependent hydrolases superfamily. Urease alpha subunit family. Heterotrimer of UreA (gamma), UreB (beta) and UreC (alpha) subunits. Three heterotrimers associate to form the active enzyme. It depends on Ni cation as a cofactor. Carboxylation allows a single lysine to coordinate two nickel ions.

It localises to the cytoplasm. The catalysed reaction is urea + 2 H2O + H(+) = hydrogencarbonate + 2 NH4(+). It participates in nitrogen metabolism; urea degradation; CO(2) and NH(3) from urea (urease route): step 1/1. The chain is Urease subunit alpha from Haemophilus influenzae (strain PittGG).